The following is a 399-amino-acid chain: Dual-specificity RNA methyltransferase RlmN (399 aa).

The active-site Proton acceptor is the Glu-122. A Radical SAM core domain is found at Glu-128–Leu-371. Cys-135 and Cys-374 are oxidised to a cystine. [4Fe-4S] cluster-binding residues include Cys-142, Cys-146, and Cys-149. S-adenosyl-L-methionine-binding positions include Gly-200–Glu-201, Ser-232, Ser-254–His-256, and Asn-331. Cys-374 (S-methylcysteine intermediate) is an active-site residue.

It belongs to the radical SAM superfamily. RlmN family. It depends on [4Fe-4S] cluster as a cofactor.

The protein resides in the cytoplasm. The catalysed reaction is adenosine(2503) in 23S rRNA + 2 reduced [2Fe-2S]-[ferredoxin] + 2 S-adenosyl-L-methionine = 2-methyladenosine(2503) in 23S rRNA + 5'-deoxyadenosine + L-methionine + 2 oxidized [2Fe-2S]-[ferredoxin] + S-adenosyl-L-homocysteine. It catalyses the reaction adenosine(37) in tRNA + 2 reduced [2Fe-2S]-[ferredoxin] + 2 S-adenosyl-L-methionine = 2-methyladenosine(37) in tRNA + 5'-deoxyadenosine + L-methionine + 2 oxidized [2Fe-2S]-[ferredoxin] + S-adenosyl-L-homocysteine. Its function is as follows. Specifically methylates position 2 of adenine 2503 in 23S rRNA and position 2 of adenine 37 in tRNAs. m2A2503 modification seems to play a crucial role in the proofreading step occurring at the peptidyl transferase center and thus would serve to optimize ribosomal fidelity. The protein is Dual-specificity RNA methyltransferase RlmN of Rhodopseudomonas palustris (strain HaA2).